The sequence spans 116 residues: MAPPSVPLVLLLVLLLSLAETPASAPAHRGRGGWTLNSAGYLLGPVLHLPQMGDQDGKRETALEILDLWKAIDGLPYSHPPQPSKRNVMETFAKPEIGDLGMLSMKIPKEEDVLKS.

The first 24 residues, 1–24 (MAPPSVPLVLLLVLLLSLAETPAS), serve as a signal peptide directing secretion. Residues 87–116 (NVMETFAKPEIGDLGMLSMKIPKEEDVLKS) constitute a propeptide that is removed on maturation.

The protein belongs to the galanin family. As to expression, isoform 2 is found in ganglia of ganglioneuroma and ganglioneuroblastoma, as well as in differentiated tumor cells of neuroblastoma tissues. Not found in undifferentiated neuroblasts. Isoform 2 is found in the skin, in pericytes covering microvascular arterioles and venules on their abluminal surfaces. In larger vessels, isoform 2 is expressed in layers of smooth muscle cells. Isoform 2 is not detected in endothelial cells.

The protein localises to the secreted. Functionally, hypothalamic neuropeptide which binds to the G-protein-coupled galanin receptors (GALR1, GALR2 and GALR3). Involved in a large number of putative physiological functions in CNS homeostatic processes, including the regulation of gonadotropin-releasing hormone secretion. In terms of biological role, exhibits potent and dose-dependent vasoconstrictor and anti-edema activity in the cutaneous microvasculature, a physiologic effects which does not appear to be mediated via GALR1 or GALR2. Exhibits antimicrobial activity against Gram-negative bacterias, inducing bacterial membrane blebbing. The polypeptide is Galanin-like peptide (GALP) (Homo sapiens (Human)).